A 396-amino-acid polypeptide reads, in one-letter code: Cystathionine beta-lyase (396 aa).

Residue K211 is modified to N6-(pyridoxal phosphate)lysine.

The protein belongs to the trans-sulfuration enzymes family. As to quaternary structure, homotetramer. It depends on pyridoxal 5'-phosphate as a cofactor.

Its subcellular location is the cytoplasm. It carries out the reaction L,L-cystathionine + H2O = L-homocysteine + pyruvate + NH4(+). The enzyme catalyses an S-substituted L-cysteine + H2O = a thiol + pyruvate + NH4(+). It participates in amino-acid biosynthesis; L-methionine biosynthesis via de novo pathway; L-homocysteine from L-cystathionine: step 1/1. In terms of biological role, catalyzes the cleavage of cystathionine to homocysteine, pyruvate and ammonia during methionine biosynthesis. The polypeptide is Cystathionine beta-lyase (metC) (Haemophilus influenzae (strain ATCC 51907 / DSM 11121 / KW20 / Rd)).